The sequence spans 144 residues: MSATEPHTDQPRTLADLCKVCNIPMHSLQLPCAFCKKTVCTAEIYAFQYKDLFVVWRHGFPHAACALCLELHGQINYRRHRDRACLWETVEQECGKPLEEIFIRCWLCHKPLCNVEKQRHVDYNRRFHCVRGYWKGRCLHCWKP.

2 zinc fingers span residues 32–68 (CAFCKKTVCTAEIYAFQYKDLFVVWRHGFPHAACALC) and 105–141 (CWLCHKPLCNVEKQRHVDYNRRFHCVRGYWKGRCLHC).

This sequence belongs to the papillomaviridae E6 protein family. Forms homodimers. Interacts with ubiquitin-protein ligase UBE3A/E6-AP; this interaction stimulates UBE3A ubiquitin activity. Interacts with host TP53 and EP300; this interaction inhibits TP53 activity.

Its subcellular location is the host cytoplasm. It localises to the host nucleus. In terms of biological role, plays a major role in the induction and maintenance of cellular transformation. E6 associates with host UBE3A/E6-AP ubiquitin-protein ligase and modulates its activity. Sequesters tumor suppressor TP53 in the host cytoplasm and modulates its activity by interacting with host EP300 that results in the reduction of TP53 acetylation and activation. In turn, apoptosis induced by DNA damage is inhibited. E6 also protects host keratinocytes from apoptosis by mediating the degradation of host BAK1. May also inhibit host immune response. The chain is Protein E6 from Homo sapiens (Human).